A 263-amino-acid chain; its full sequence is Follistatin-related protein 3 (263 aa).

The signal sequence occupies residues 1–26; it reads MRPGAPGPLWPLPWGALAWAVGFVSS. Residues 36–107 enclose the TB domain; it reads GVCWLQQGQE…SCDGVECGPG (72 aa). Disulfide bonds link Cys-38/Cys-61, Cys-48/Cys-92, Cys-62/Cys-95, Cys-99/Cys-110, Cys-104/Cys-119, Cys-121/Cys-153, Cys-125/Cys-146, Cys-135/Cys-167, Cys-171/Cys-182, Cys-176/Cys-192, Cys-195/Cys-229, Cys-200/Cys-222, and Cys-211/Cys-243. An N-linked (GlcNAc...) asparagine glycan is attached at Asn-73. In terms of domain architecture, Follistatin-like 1 spans 99–119; that stretch reads CDGVECGPGKACRMLGGRPRC. Positions 113-169 constitute a Kazal-like 1 domain; it reads LGGRPRCECAPDCSGLPARLQVCGSDGATYRDECELRAARCRGHPDLSVMYRGRCRK. The Follistatin-like 2 domain occupies 170–193; it reads SCEHVVCPRPQSCVVDQTGSAHCV. One can recognise a Kazal-like 2 domain in the interval 189–245; the sequence is SAHCVVCRAAPCPVPSSPGQELCGNNNVTYISSCHMRQATCFLGRSIGVRHAGSCAG. A glycan (N-linked (GlcNAc...) asparagine) is linked at Asn-215. The segment at 242-263 is disordered; the sequence is SCAGTPEEPPGGESAEEEENFV. Ser-255 carries the post-translational modification Phosphoserine; by FAM20C.

As to quaternary structure, interacts with INHBA and INHBB. Interacts with FN1. Interacts with ADAM12. Isoform 2 interacts with MLLT10; the interaction enhances MLLT10 in vitro transcriptional activity and self-association. Interacts with MSTN. In terms of tissue distribution, expressed in a wide range of tissues.

The protein resides in the secreted. Its subcellular location is the nucleus. Its function is as follows. Isoform 1 or the secreted form is a binding and antagonizing protein for members of the TGF-beta family, such as activin, BMP2 and MSTN. Inhibits activin A-, activin B-, BMP2- and MSDT-induced cellular signaling; more effective on activin A than on activin B. Involved in bone formation; inhibits osteoclast differentiation. Involved in hematopoiesis; involved in differentiation of hemopoietic progenitor cells, increases hematopoietic cell adhesion to fibronectin and seems to contribute to the adhesion of hematopoietic precursor cells to the bone marrow stroma. Isoform 2 or the nuclear form is probably involved in transcriptional regulation via interaction with MLLT10. In Homo sapiens (Human), this protein is Follistatin-related protein 3 (FSTL3).